The sequence spans 220 residues: UPF0319 protein YccT (220 aa).

The signal sequence occupies residues 1-20 (MKTGIVTTLIALCLPVSVFA).

It belongs to the UPF0319 family.

The chain is UPF0319 protein YccT from Shigella flexneri serotype 5b (strain 8401).